A 1318-amino-acid chain; its full sequence is Serine/threonine-protein kinase ppk18 (1318 aa).

The interval P431 to R485 is disordered. Over residues S462–S479 the composition is skewed to low complexity. One can recognise a Protein kinase domain in the interval Y566–F934. ATP-binding positions include I572–V580 and K595. D690 (proton acceptor) is an active-site residue. Positions N935–N1044 constitute an AGC-kinase C-terminal domain. Disordered regions lie at residues G968–A1022, K1058–S1078, and S1091–S1127. Positions S972–R1000 are enriched in polar residues. A compositionally biased stretch (polar residues) spans S1091 to D1115. Over residues V1116–S1127 the composition is skewed to basic and acidic residues. The 117-residue stretch at K1200–C1316 folds into the Response regulatory domain.

It belongs to the protein kinase superfamily. Ser/Thr protein kinase family.

It localises to the cytoplasm. The enzyme catalyses L-seryl-[protein] + ATP = O-phospho-L-seryl-[protein] + ADP + H(+). It catalyses the reaction L-threonyl-[protein] + ATP = O-phospho-L-threonyl-[protein] + ADP + H(+). This chain is Serine/threonine-protein kinase ppk18 (ppk18), found in Schizosaccharomyces pombe (strain 972 / ATCC 24843) (Fission yeast).